Reading from the N-terminus, the 66-residue chain is Large ribosomal subunit protein bL35 (66 aa).

A disordered region spans residues 20-40; that stretch reads GKIKSTQSAKRHGMTKRSKRS. Positions 28-40 are enriched in basic residues; sequence AKRHGMTKRSKRS.

The protein belongs to the bacterial ribosomal protein bL35 family.

In Ehrlichia chaffeensis (strain ATCC CRL-10679 / Arkansas), this protein is Large ribosomal subunit protein bL35.